Reading from the N-terminus, the 281-residue chain is MVQIQFHQGEPLGHKKEKPPPVSPPSPPPIRRVTVITKDEDTLRSVQHFLWMVRLYGTVVFQTSATIATTILFMLIPWRVTTPYLRDTLPFWSTLLPCALRCHAYWLERQRRPGTLMLVMVYTTLTTISVSTIGLCFDRTVVIQAYVLSSMLCVWCTGLAWLMAWNMQRRLAILCLLSFMLPILWLFIAVQSWEPYQRIILALTVSFIYGLKIVLIRDTLTVLYRSPSNCYTDGDLLRTAMLLYMDQVIMFLLVVVPLTAPIWYPNYAGALGRTAHWLFHK.

Residues 1-30 (MVQIQFHQGEPLGHKKEKPPPVSPPSPPPI) are disordered. Positions 20-30 (PPVSPPSPPPI) are enriched in pro residues. 7 helical membrane passes run 58 to 78 (TVVFQTSATIATTILFMLIPW), 88 to 107 (TLPFWSTLLPCALRCHAYWL), 117 to 137 (MLVMVYTTLTTISVSTIGLCF), 145 to 165 (AYVLSSMLCVWCTGLAWLMAW), 171 to 191 (LAILCLLSFMLPILWLFIAVQ), 196 to 216 (YQRIILALTVSFIYGLKIVLI), and 248 to 268 (VIMFLLVVVPLTAPIWYPNYA).

This sequence belongs to the cytomegalovirus US12 family.

The protein localises to the host membrane. This is an uncharacterized protein from Homo sapiens (Human).